A 148-amino-acid chain; its full sequence is Small ribosomal subunit protein bS16 (148 aa).

A compositionally biased stretch (low complexity) spans 111 to 122 (AAAGEEPVAEAT). Residues 111 to 148 (AAAGEEPVAEATTPKKKGGKKAEAEDKAEEQKSEEGQA) are disordered. A compositionally biased stretch (basic and acidic residues) spans 130-148 (KKAEAEDKAEEQKSEEGQA).

The protein belongs to the bacterial ribosomal protein bS16 family.

This Saccharopolyspora erythraea (strain ATCC 11635 / DSM 40517 / JCM 4748 / NBRC 13426 / NCIMB 8594 / NRRL 2338) protein is Small ribosomal subunit protein bS16.